Reading from the N-terminus, the 65-residue chain is DNA gyrase inhibitor YacG (65 aa).

Zn(2+) contacts are provided by Cys-10, Cys-13, Cys-29, and Cys-33. The tract at residues 45–65 is disordered; sequence EKAIPGAPDMSDSDGWSEDQY. Residues 55–65 are compositionally biased toward acidic residues; the sequence is SDSDGWSEDQY.

This sequence belongs to the DNA gyrase inhibitor YacG family. As to quaternary structure, interacts with GyrB. Zn(2+) is required as a cofactor.

Functionally, inhibits all the catalytic activities of DNA gyrase by preventing its interaction with DNA. Acts by binding directly to the C-terminal domain of GyrB, which probably disrupts DNA binding by the gyrase. The protein is DNA gyrase inhibitor YacG of Vibrio cholerae serotype O1 (strain ATCC 39315 / El Tor Inaba N16961).